Here is a 707-residue protein sequence, read N- to C-terminus: Tubulin polyglutamylase ttll-11 (707 aa).

In terms of domain architecture, TTL spans 124–488 (RFTIDTSRAK…PLVRDTLLLV (365 aa)). ATP contacts are provided by residues 279-282 (QEYV), K293, and D295. Residues 675–707 (RNRSGTNGRKQNFTDDNNNPNSFAHLPKINERL) are disordered. The span at 677-696 (RSGTNGRKQNFTDDNNNPNS) shows a compositional bias: polar residues.

Belongs to the tubulin--tyrosine ligase family. Expressed in amphid sensory neurons. Weakly expressed in body wall muscles. Isoform a: Specifically expressed in ciliated sensory neurons in the head, including the IL1s, OLQ, head CEP, and amphid neurons. In the male tail, expressed in HOA, RnA, and phasmid neurons. Isoform b: Specifically expressed in male and hermaphrodite IL2 ciliated sensory neurons, and in male-specific CEM, HOB and RnB ciliated sensory neurons.

The protein localises to the cell projection. Its subcellular location is the axon. It localises to the perikaryon. It is found in the dendrite. The protein resides in the cilium. The protein localises to the extracellular vesicle. It carries out the reaction L-glutamyl-[protein] + L-glutamate + ATP = gamma-L-glutamyl-L-glutamyl-[protein] + ADP + phosphate + H(+). In terms of biological role, polyglutamylase which preferentially modifies tubulin. Involved in the side-chain initiation step of the polyglutamylation reaction. By controlling tubulin glutamylation, regulates ciliary specialization and motor-based transport. Promotes the formation of A and B tubule singlets by splaying microtubule doublets in cilia. Together with ttll-4 and 5, required for male mating. Its function is as follows. Specifically promotes tubulin glutamylation in a subset of ciliated neurons including amphid, phasmid, CEP and RnA neurons. Functionally, specifically promotes tubulin glutamylation in male ciliated CEM, HOB and RnB neurons that release bioactive extracellular vesicles. Regulates the localization of TRP channel pdk-2 in male CEM, HOB and RnB neurons. Regulates the environmental release of bioactive extracellular vesicles in cilia. The polypeptide is Tubulin polyglutamylase ttll-11 (Caenorhabditis elegans).